We begin with the raw amino-acid sequence, 548 residues long: Mannosyltransferase APTG1 (548 aa).

Positions 1-23 are disordered; it reads MDIRKRKNAGGDGDGGADGASVN. The next 3 membrane-spanning stretches (helical) occupy residues 41-61, 98-118, and 146-166; these read IFLF…TYFN, LFAF…YIMI, and GNVA…FFCL. A glycan (N-linked (GlcNAc...) asparagine) is linked at Asn-167. Helical transmembrane passes span 169 to 189, 204 to 224, 238 to 258, 260 to 280, 294 to 314, 320 to 340, and 342 to 362; these read TFSN…WPCI, LVIA…WLYV, FIIL…CLLD, LMYG…FLSS, FTQG…AGII, KLSA…HKEF, and FVLP…AQME. Residue Asn-382 is glycosylated (N-linked (GlcNAc...) asparagine). The helical transmembrane segment at 392 to 412 threads the bilayer; sequence LSVYFLLATNIPMALYMSLFH. Residue Asn-490 is glycosylated (N-linked (GlcNAc...) asparagine).

Belongs to the glycosyltransferase 22 family. Mostly expressed, mainly in vascular tissues, in leaves, roots, stems, flowers, siliques and pollen, and, to a lower extent, in seedlings.

It localises to the endoplasmic reticulum membrane. Its function is as follows. Mannosyltransferase involved in glycosylphosphatidylinositol-anchor biosynthesis. Required for the pollen tube micropylar guidance and embryo development by regulating GPI-anchor mediated protein localization (e.g. COBL10 and A36). In Arabidopsis thaliana (Mouse-ear cress), this protein is Mannosyltransferase APTG1.